The primary structure comprises 438 residues: Histidinol dehydrogenase (438 aa).

The NAD(+) site is built by Tyr-135, Gln-193, and Asn-216. Substrate-binding residues include Ser-243, Gln-265, and His-268. Positions 265 and 268 each coordinate Zn(2+). Catalysis depends on proton acceptor residues Glu-332 and His-333. Positions 333, 366, 420, and 425 each coordinate substrate. Asp-366 is a Zn(2+) binding site. His-425 contributes to the Zn(2+) binding site.

It belongs to the histidinol dehydrogenase family. The cofactor is Zn(2+).

The catalysed reaction is L-histidinol + 2 NAD(+) + H2O = L-histidine + 2 NADH + 3 H(+). It participates in amino-acid biosynthesis; L-histidine biosynthesis; L-histidine from 5-phospho-alpha-D-ribose 1-diphosphate: step 9/9. Functionally, catalyzes the sequential NAD-dependent oxidations of L-histidinol to L-histidinaldehyde and then to L-histidine. The sequence is that of Histidinol dehydrogenase from Shewanella oneidensis (strain ATCC 700550 / JCM 31522 / CIP 106686 / LMG 19005 / NCIMB 14063 / MR-1).